A 156-amino-acid polypeptide reads, in one-letter code: Arginine repressor (156 aa).

This sequence belongs to the ArgR family.

It is found in the cytoplasm. It functions in the pathway amino-acid biosynthesis; L-arginine biosynthesis [regulation]. Regulates arginine biosynthesis genes. This Aeromonas hydrophila subsp. hydrophila (strain ATCC 7966 / DSM 30187 / BCRC 13018 / CCUG 14551 / JCM 1027 / KCTC 2358 / NCIMB 9240 / NCTC 8049) protein is Arginine repressor.